A 433-amino-acid chain; its full sequence is Putative purine permease YbbY (433 aa).

Residues 1–17 (MFNFAVSRESLLSGFQW) are Periplasmic-facing. A helical transmembrane segment spans residues 18–38 (FFFIFCNTVVVPPTLLSAFQL). Over 39 to 42 (PQSS) the chain is Cytoplasmic. A helical membrane pass occupies residues 43–63 (LLTLTQYAFLATALACFAQAF). At 64 to 68 (CGHRR) the chain is on the periplasmic side. A helical membrane pass occupies residues 69–89 (AIMEGPGGLWWGTILTITLGE). Residues 90-102 (ASRGTPINDIATS) lie on the Cytoplasmic side of the membrane. A helical transmembrane segment spans residues 103 to 123 (LAVGIALSGVLTMLIGFSGLG). The Periplasmic portion of the chain corresponds to 124–130 (HRLARLF). Residues 131–151 (TPSVMVLFMLMLGAQLTTIFF) traverse the membrane as a helical segment. The Cytoplasmic segment spans residues 152–169 (KGMLGLPFGIADPNFKIQ). A helical transmembrane segment spans residues 170–190 (LPPFALSVAVMCLVLAMIIFL). Topologically, residues 191–196 (PQRFAR) are periplasmic. Residues 197-217 (YGLLVGTITGWLLWYFCFPSS) form a helical membrane-spanning segment. Over 218-230 (HSLSGELHWQWFP) the chain is Cytoplasmic. Residues 231-251 (LGSGGALSPGIILTAVITGLV) traverse the membrane as a helical segment. Topologically, residues 252-288 (NISNTYGAIRGTDVFYPQQGAGNTRYRRSFVATGFMT) are periplasmic. A helical membrane pass occupies residues 289–309 (LITVPLAVIPFSPFVSSIGLL). Residues 310-319 (TQTGDYTRRS) are Cytoplasmic-facing. The chain crosses the membrane as a helical span at residues 320–340 (FIYGSVICLLVALVPALTRLF). Over 341-345 (CSIPL) the chain is Periplasmic. The chain crosses the membrane as a helical span at residues 346-366 (PVSSAVMLVSYLPLLFSALVF). Residues 367–379 (SQQITFTARNIYR) are Cytoplasmic-facing. Residues 380 to 400 (LALPLFVGIFLMALPPVYLQD) form a helical membrane-spanning segment. At 401–407 (LPLTLRP) the chain is on the periplasmic side. The chain crosses the membrane as a helical span at residues 408-428 (LLSNGLLVGILLAVLMDNLIP). The Cytoplasmic portion of the chain corresponds to 429 to 433 (WERIE).

This sequence belongs to the nucleobase:cation symporter-2 (NCS2) (TC 2.A.40) family.

The protein localises to the cell inner membrane. In Escherichia coli (strain K12), this protein is Putative purine permease YbbY (ybbY).